A 312-amino-acid chain; its full sequence is Acetaldehyde dehydrogenase 2 (312 aa).

Position 11-14 (11-14) interacts with NAD(+); that stretch reads SGNI. The active-site Acyl-thioester intermediate is the cysteine 129. NAD(+) is bound by residues 160 to 168 and asparagine 287; that span reads SAGPGTRAN.

Belongs to the acetaldehyde dehydrogenase family.

The catalysed reaction is acetaldehyde + NAD(+) + CoA = acetyl-CoA + NADH + H(+). This Novosphingobium aromaticivorans (strain ATCC 700278 / DSM 12444 / CCUG 56034 / CIP 105152 / NBRC 16084 / F199) protein is Acetaldehyde dehydrogenase 2.